The following is a 330-amino-acid chain: Probable ADP,ATP carrier protein At5g56450 (330 aa).

Over residues 1–10 the composition is skewed to acidic residues; it reads MCISKEDEED. The tract at residues 1-22 is disordered; the sequence is MCISKEDEEDPSRNRRNQSPLS. Transmembrane regions (helical) follow at residues 27-61, 103-127, 137-171, 203-230, 236-270, and 300-325; these read LKHF…LQTQ, GSSV…RSIL, IFSG…RLAA, GLPA…EIFS, ELAL…IMMQ, and GALS…KRFL. Solcar repeat units follow at residues 28 to 126, 139 to 228, and 241 to 324; these read KHFQ…YRSI, SGAL…VKEI, and KRWG…VKRF. 2 residues coordinate ADP: R108 and K120. R264 is a binding site for ADP. The Substrate recognition motif lies at 264–269; the sequence is RRRIMM.

Belongs to the mitochondrial carrier (TC 2.A.29) family. Monomer.

The protein resides in the membrane. It carries out the reaction ADP(in) + ATP(out) = ADP(out) + ATP(in). ADP:ATP antiporter that catalyzes the exchange of ADP and ATP across the membrane. The polypeptide is Probable ADP,ATP carrier protein At5g56450 (Arabidopsis thaliana (Mouse-ear cress)).